We begin with the raw amino-acid sequence, 75 residues long: Putative membrane protein insertion efficiency factor (75 aa).

This sequence belongs to the UPF0161 family.

It is found in the cell membrane. Could be involved in insertion of integral membrane proteins into the membrane. This chain is Putative membrane protein insertion efficiency factor, found in Halalkalibacterium halodurans (strain ATCC BAA-125 / DSM 18197 / FERM 7344 / JCM 9153 / C-125) (Bacillus halodurans).